Here is a 746-residue protein sequence, read N- to C-terminus: Polyphosphate kinase (746 aa).

Positions 1-17 are enriched in polar residues; the sequence is MRQPNTQAEAQHTQPSV. The interval 1 to 60 is disordered; that stretch reads MRQPNTQAEAQHTQPSVGSIAAHRPNTVAATVSGLEPDIDADLDAYEESEESQDGGARLP. Positions 37-53 are enriched in acidic residues; it reads PDIDADLDAYEESEESQ. N102 contributes to the ATP binding site. R429 and R459 together coordinate Mg(2+). The Phosphohistidine intermediate role is filled by H489. ATP-binding residues include Y522, R618, and H646.

It belongs to the polyphosphate kinase 1 (PPK1) family. Requires Mg(2+) as cofactor. An intermediate of this reaction is the autophosphorylated ppk in which a phosphate is covalently linked to a histidine residue through a N-P bond.

It catalyses the reaction [phosphate](n) + ATP = [phosphate](n+1) + ADP. Its function is as follows. Catalyzes the reversible transfer of the terminal phosphate of ATP to form a long-chain polyphosphate (polyP). The polypeptide is Polyphosphate kinase (Streptomyces coelicolor (strain ATCC BAA-471 / A3(2) / M145)).